A 300-amino-acid polypeptide reads, in one-letter code: Ribosomal protein bS6--L-glutamate ligase (300 aa).

In terms of domain architecture, ATP-grasp spans 104-287; that stretch reads MQLLARQGID…IAGKMIRWIE (184 aa). Residues lysine 141, 178-179, aspartate 187, and 211-213 each bind ATP; these read EY and RSN. Aspartate 248, glutamate 260, and asparagine 262 together coordinate Mg(2+). Residues aspartate 248, glutamate 260, and asparagine 262 each coordinate Mn(2+).

It belongs to the RimK family. The cofactor is Mg(2+). It depends on Mn(2+) as a cofactor.

An L-glutamate ligase that catalyzes the ATP-dependent post-translational addition of glutamate residues to the C-terminus of ribosomal protein bS6 (RpsF). Is also able to catalyze the synthesis of poly-alpha-glutamate in vitro, via ATP hydrolysis from unprotected glutamate as substrate. The number of glutamate residues added to either RpsF or to poly-alpha-glutamate changes with pH. This Shigella boydii serotype 4 (strain Sb227) protein is Ribosomal protein bS6--L-glutamate ligase.